A 380-amino-acid polypeptide reads, in one-letter code: Succinate--CoA ligase [ADP-forming] subunit beta (380 aa).

The region spanning 9–237 is the ATP-grasp domain; that stretch reads RDLLARFGIP…PSAEPEAERR (229 aa). ATP contacts are provided by residues Lys-45, 52–54, Val-94, and Glu-99; that span reads GRG. Positions 192 and 206 each coordinate Mg(2+). Substrate contacts are provided by residues Asn-257 and 314–316; that span reads GIT.

Belongs to the succinate/malate CoA ligase beta subunit family. Heterotetramer of two alpha and two beta subunits. Mg(2+) is required as a cofactor.

It catalyses the reaction succinate + ATP + CoA = succinyl-CoA + ADP + phosphate. The catalysed reaction is GTP + succinate + CoA = succinyl-CoA + GDP + phosphate. It participates in carbohydrate metabolism; tricarboxylic acid cycle; succinate from succinyl-CoA (ligase route): step 1/1. Functionally, succinyl-CoA synthetase functions in the citric acid cycle (TCA), coupling the hydrolysis of succinyl-CoA to the synthesis of either ATP or GTP and thus represents the only step of substrate-level phosphorylation in the TCA. The beta subunit provides nucleotide specificity of the enzyme and binds the substrate succinate, while the binding sites for coenzyme A and phosphate are found in the alpha subunit. This Chloroflexus aurantiacus (strain ATCC 29366 / DSM 635 / J-10-fl) protein is Succinate--CoA ligase [ADP-forming] subunit beta.